Here is a 92-residue protein sequence, read N- to C-terminus: Putative protein pog (92 aa).

This chain is Putative protein pog, found in Acute bee paralysis virus (strain Rothamsted) (ABPV).